The chain runs to 27 residues: Palustrin-1d (27 aa).

Residues cysteine 21 and cysteine 27 are joined by a disulfide bond.

Expressed by the skin glands.

It localises to the secreted. Antimicrobial activity against Gram-negative bacterium E.coli. In Lithobates palustris (Pickerel frog), this protein is Palustrin-1d.